A 209-amino-acid polypeptide reads, in one-letter code: Ribosomal RNA large subunit methyltransferase E (209 aa).

Positions 63, 65, 83, 99, and 124 each coordinate S-adenosyl-L-methionine. Lys-164 functions as the Proton acceptor in the catalytic mechanism.

This sequence belongs to the class I-like SAM-binding methyltransferase superfamily. RNA methyltransferase RlmE family.

Its subcellular location is the cytoplasm. It catalyses the reaction uridine(2552) in 23S rRNA + S-adenosyl-L-methionine = 2'-O-methyluridine(2552) in 23S rRNA + S-adenosyl-L-homocysteine + H(+). Its function is as follows. Specifically methylates the uridine in position 2552 of 23S rRNA at the 2'-O position of the ribose in the fully assembled 50S ribosomal subunit. The chain is Ribosomal RNA large subunit methyltransferase E from Shewanella piezotolerans (strain WP3 / JCM 13877).